Consider the following 68-residue polypeptide: MSDETAKPFEPKPCPICGKPSIERYKPFCSKRCADVDLNRWLTGAYAIPVVEEEDEDGEPLSPPLRPE.

Positions 14, 17, 29, and 33 each coordinate Zn(2+).

The protein belongs to the DNA gyrase inhibitor YacG family. In terms of assembly, interacts with GyrB. Zn(2+) serves as cofactor.

In terms of biological role, inhibits all the catalytic activities of DNA gyrase by preventing its interaction with DNA. Acts by binding directly to the C-terminal domain of GyrB, which probably disrupts DNA binding by the gyrase. In Azorhizobium caulinodans (strain ATCC 43989 / DSM 5975 / JCM 20966 / LMG 6465 / NBRC 14845 / NCIMB 13405 / ORS 571), this protein is DNA gyrase inhibitor YacG.